Here is a 508-residue protein sequence, read N- to C-terminus: UTP--glucose-1-phosphate uridylyltransferase (508 aa).

Serine 13 carries the post-translational modification Phosphoserine. UTP-binding positions include 113–116 (LNGG), lysine 127, glutamine 190, and glycine 222. 115 to 116 (GG) serves as a coordination point for substrate. Mg(2+) is bound at residue lysine 127. Residues histidine 223 and 251-253 (NID) contribute to the substrate site. UTP is bound by residues aspartate 253 and lysine 396. Aspartate 253 is a Mg(2+) binding site. Residue lysine 396 is part of the active site. Phosphothreonine is present on threonine 426. Residue serine 434 is modified to Phosphoserine. Position 438 is an N6-acetyllysine (lysine 438). Phosphoserine is present on residues serine 448 and serine 461. An oligomerization region spans residues 457 to 508 (HLTVSGDVTFGKNVSLKGTVIIIANHGDRIDIPPGAVLENKIVSGNLRILDH). The critical for end-to-end subunit interaction stretch occupies residues 502-503 (NL).

Belongs to the UDPGP type 1 family. As to quaternary structure, homooctamer.

Its subcellular location is the cytoplasm. It carries out the reaction alpha-D-glucose 1-phosphate + UTP + H(+) = UDP-alpha-D-glucose + diphosphate. Its pathway is glycan biosynthesis; glycogen biosynthesis. UTP--glucose-1-phosphate uridylyltransferase catalyzing the conversion of glucose-1-phosphate into UDP-glucose, a crucial precursor for the production of glycogen. The protein is UTP--glucose-1-phosphate uridylyltransferase (UGP2) of Cricetulus griseus (Chinese hamster).